The following is a 267-amino-acid chain: 2-keto-3-deoxy-L-rhamnonate aldolase (267 aa).

His49 (proton acceptor) is an active-site residue. Gln151 contributes to the substrate binding site. Glu153 serves as a coordination point for Mg(2+). Substrate is bound by residues Ala178 and Asp179. Position 179 (Asp179) interacts with Mg(2+).

It belongs to the HpcH/HpaI aldolase family. KDR aldolase subfamily. In terms of assembly, homohexamer. Requires Mg(2+) as cofactor.

It carries out the reaction 2-dehydro-3-deoxy-L-rhamnonate = (S)-lactaldehyde + pyruvate. Catalyzes the reversible retro-aldol cleavage of 2-keto-3-deoxy-L-rhamnonate (KDR) to pyruvate and lactaldehyde. The polypeptide is 2-keto-3-deoxy-L-rhamnonate aldolase (Salmonella typhi).